The primary structure comprises 658 residues: Integrator complex subunit 9 (658 aa).

A disordered region spans residues 550 to 574 (KHVLQLPPKPPQPPTSKKRKRVSDD). The Nuclear localization signal signature appears at 566–570 (KKRKR).

It belongs to the metallo-beta-lactamase superfamily. RNA-metabolizing metallo-beta-lactamase-like family. INTS9 subfamily. In terms of assembly, component of the Integrator complex, composed of core subunits INTS1, INTS2, INTS3, INTS4, INTS5, INTS6, INTS7, INTS8, INTS9/RC74, INTS10, INTS11/CPSF3L, INTS12, INTS13, INTS14 and INTS15. The core complex associates with protein phosphatase 2A subunits PPP2CA and PPP2R1A, to form the Integrator-PP2A (INTAC) complex. INTS9 is part of the RNA endonuclease subcomplex, composed of INTS4, INTS9, INTS11 and inositol hexakisphosphate (InsP6).

The protein resides in the nucleus. The protein localises to the cytoplasm. Its function is as follows. Component of the integrator complex, a multiprotein complex that terminates RNA polymerase II (Pol II) transcription in the promoter-proximal region of genes. The integrator complex provides a quality checkpoint during transcription elongation by driving premature transcription termination of transcripts that are unfavorably configured for transcriptional elongation: the complex terminates transcription by (1) catalyzing dephosphorylation of the C-terminal domain (CTD) of Pol II subunit POLR2A/RPB1 and SUPT5H/SPT5, (2) degrading the exiting nascent RNA transcript via endonuclease activity and (3) promoting the release of Pol II from bound DNA. The integrator complex is also involved in terminating the synthesis of non-coding Pol II transcripts, such as enhancer RNAs (eRNAs), small nuclear RNAs (snRNAs), telomerase RNAs and long non-coding RNAs (lncRNAs). This is Integrator complex subunit 9 (INTS9) from Gallus gallus (Chicken).